The primary structure comprises 154 residues: MGLSDEEWKKVVDIWGKVEPDLPSHGQEVIIRMFQNHPETQDRFAKFKNLKTLDEMKNSEDLKKHGTTVLTALGRILKQKGHHEAEIAPLAQTHANTHKIPIKYLEFICEVIVGVIAEKHSADFGADSQEAMRKALELFRNDMASRYKELGFQG.

In terms of domain architecture, Globin spans 2–148; the sequence is GLSDEEWKKV…FRNDMASRYK (147 aa). Position 65 (histidine 65) interacts with nitrite. An O2-binding site is contributed by histidine 65. Position 94 (histidine 94) interacts with heme b.

Belongs to the globin family. Monomeric.

It is found in the cytoplasm. Its subcellular location is the sarcoplasm. The enzyme catalyses Fe(III)-heme b-[protein] + nitric oxide + H2O = Fe(II)-heme b-[protein] + nitrite + 2 H(+). The catalysed reaction is H2O2 + AH2 = A + 2 H2O. Monomeric heme protein which primary function is to store oxygen and facilitate its diffusion within muscle tissues. Reversibly binds oxygen through a pentacoordinated heme iron and enables its timely and efficient release as needed during periods of heightened demand. Depending on the oxidative conditions of tissues and cells, and in addition to its ability to bind oxygen, it also has a nitrite reductase activity whereby it regulates the production of bioactive nitric oxide. Under stress conditions, like hypoxia and anoxia, it also protects cells against reactive oxygen species thanks to its pseudoperoxidase activity. The polypeptide is Myoglobin (MB) (Varanus varius (Lace monitor lizard)).